A 922-amino-acid polypeptide reads, in one-letter code: DNA gyrase subunit A (922 aa).

Residues 34–534 enclose the Topo IIA-type catalytic domain; it reads LPDVRDGLKP…SSAEINIEDL (501 aa). Catalysis depends on Y122, which acts as the O-(5'-phospho-DNA)-tyrosine intermediate. The GyrA-box motif lies at 561–567; that stretch reads QRRGGRG. Disordered regions lie at residues 715-763 and 899-922; these read MQPM…VRPM and IDGE…DPEE. Positions 723 to 743 are enriched in acidic residues; it reads DDVDGDDESVIDAGNDDDGSD.

The protein belongs to the type II topoisomerase GyrA/ParC subunit family. Heterotetramer, composed of two GyrA and two GyrB chains. In the heterotetramer, GyrA contains the active site tyrosine that forms a transient covalent intermediate with DNA, while GyrB binds cofactors and catalyzes ATP hydrolysis.

The protein resides in the cytoplasm. The catalysed reaction is ATP-dependent breakage, passage and rejoining of double-stranded DNA.. A type II topoisomerase that negatively supercoils closed circular double-stranded (ds) DNA in an ATP-dependent manner to modulate DNA topology and maintain chromosomes in an underwound state. Negative supercoiling favors strand separation, and DNA replication, transcription, recombination and repair, all of which involve strand separation. Also able to catalyze the interconversion of other topological isomers of dsDNA rings, including catenanes and knotted rings. Type II topoisomerases break and join 2 DNA strands simultaneously in an ATP-dependent manner. The sequence is that of DNA gyrase subunit A from Aeromonas salmonicida.